Consider the following 235-residue polypeptide: Caveolin-1 (235 aa).

Over 1 to 161 (MSTEQDIKTE…LVSLLALPFT (161 aa)) the chain is Cytoplasmic. The disordered stretch occupies residues 29–72 (GEAVVAPEEPKPKKNWFTFGKKKAAPTDETNIEEGGAPGDEPVK). The segment at residues 162–182 (IIFAIFFGLLASINVFIIVPL) is an intramembrane region (helical). At 183 to 235 (GKLLSIPGTLLAKLWNWLIHAIFDPIASAVGLIFSNFNIRKYGINQETTAPCV) the chain is on the cytoplasmic side. The S-palmitoyl cysteine moiety is linked to residue cysteine 234.

The protein belongs to the caveolin family. In terms of assembly, homooligomer containing 14-16 monomers per oligomer.

Its subcellular location is the golgi apparatus membrane. It localises to the cell membrane. The protein resides in the membrane. The protein localises to the caveola. May act as a scaffolding protein within caveolar membranes. Interacts directly with G-protein alpha subunits and can functionally regulate their activity. This Caenorhabditis elegans protein is Caveolin-1 (cav-1).